A 558-amino-acid polypeptide reads, in one-letter code: MPATEKASAPHWSFLSSDVISIMKSNPSTLLLPLAALSLASCANPQKEETKRPNIIFMMTDDHTTQAMSCYGGNLIQTPNMDRIANEGIRFDNCYAVNALSGPSRACILTGKFSHENGFTDNASTFNGDQQTFPKLLQQAGYQTAMIGKWHLISEPQGFDHWSILSGQHEQGDYYDPDFWEDGKHIVEKGYATDIITDKAINFLENRDKNKPFCMMYHQKAPHRNWMPAPRHLGIFNNTIFPEPANLFDDYEGRGKAAREQDMSIEHTLTNDWDLKLLTREEMLKDTTNRLYSVYKRMPSEVQDKWDSAYAQRIAEYRKGDLKGKALISWKYQQYMRDYLATVLAVDENIGRLLNYLEKIGELDNTIIVYTSDQGFFLGEHGWFDKRFMYEECQRMPLIIRYPKAIKAGSTSSAISMNVDFAPTFLDFAGVEVPSDIQGASLKPVLENEGKTPADWRKAAYYHYYEYPAEHSVKRHYGIRTQDFKLIHFYNDIDEWEMYDMKADPREMNNIFGKAEYAKKQKELMQLLEETQKQYKDNDPDEKETVLFKGDRRLMENR.

Serine 101 bears the 3-oxoalanine (Ser) mark.

This sequence belongs to the sulfatase family. Post-translationally, the conversion to 3-oxoalanine (also known as C-formylglycine, FGly), of a serine or cysteine residue in prokaryotes and of a cysteine residue in eukaryotes, is critical for catalytic activity.

Functionally, exosulfatase involved in the degradation of the glycosaminoglycan (GAG) heparan sulfate (HS). Catalyzes the hydrolysis of the 6-sulfate groups of the N-acetyl-D-glucosamine 6-sulfate units. GAG-specific sulfatases play a key role in the persistence of the major human gut symbiont B.thetaiotaomicron in the host gastrointestinal tract. The polypeptide is N-acetylglucosamine-6-O-sulfatase (Bacteroides thetaiotaomicron (strain ATCC 29148 / DSM 2079 / JCM 5827 / CCUG 10774 / NCTC 10582 / VPI-5482 / E50)).